The following is a 214-amino-acid chain: Orotate phosphoribosyltransferase (214 aa).

Residue K26 participates in 5-phospho-alpha-D-ribose 1-diphosphate binding. 34–35 (FF) provides a ligand contact to orotate. 5-phospho-alpha-D-ribose 1-diphosphate contacts are provided by residues 72–73 (YK), R99, K100, K103, H105, and 124–132 (DDVITAGTA). Orotate-binding residues include T128 and R156.

The protein belongs to the purine/pyrimidine phosphoribosyltransferase family. PyrE subfamily. Homodimer. It depends on Mg(2+) as a cofactor.

The enzyme catalyses orotidine 5'-phosphate + diphosphate = orotate + 5-phospho-alpha-D-ribose 1-diphosphate. It participates in pyrimidine metabolism; UMP biosynthesis via de novo pathway; UMP from orotate: step 1/2. Functionally, catalyzes the transfer of a ribosyl phosphate group from 5-phosphoribose 1-diphosphate to orotate, leading to the formation of orotidine monophosphate (OMP). The sequence is that of Orotate phosphoribosyltransferase from Pseudoalteromonas translucida (strain TAC 125).